Reading from the N-terminus, the 448-residue chain is Fumarate hydratase class II (448 aa).

Substrate-binding positions include 83–85 (SGT), 113–116 (HPND), 123–125 (SSN), and Thr-171. The Proton donor/acceptor role is filled by His-172. Ser-302 is a catalytic residue. Substrate contacts are provided by residues Ser-303 and 308–310 (KVN).

The protein belongs to the class-II fumarase/aspartase family. Fumarase subfamily. As to quaternary structure, homotetramer.

The protein resides in the cytoplasm. The enzyme catalyses (S)-malate = fumarate + H2O. The protein operates within carbohydrate metabolism; tricarboxylic acid cycle; (S)-malate from fumarate: step 1/1. Involved in the TCA cycle. Catalyzes the stereospecific interconversion of fumarate to L-malate. The sequence is that of Fumarate hydratase class II from Blochmanniella floridana.